A 339-amino-acid chain; its full sequence is Deubiquitinase and deneddylase Dub2 (339 aa).

The helical transmembrane segment at 36 to 56 (IIIALFLIVISCGLILCAYTF) threads the bilayer. Catalysis depends on residues His-203, Asp-220, and Cys-282.

This sequence belongs to the peptidase C48 family.

The protein localises to the secreted. It localises to the host cell. Its subcellular location is the membrane. Functionally, effector proteins function to alter host cell physiology and promote bacterial survival in host tissues. This protease possesses deubiquitinating and deneddylating activities. The chain is Deubiquitinase and deneddylase Dub2 (cdu2) from Chlamydia trachomatis serovar L2 (strain ATCC VR-902B / DSM 19102 / 434/Bu).